The following is a 496-amino-acid chain: Stomatal closure-related actin-binding protein 1 (496 aa).

A coiled-coil region spans residues 126–269 (RNKDDVEEAI…FLQLQKKLAM (144 aa)).

The protein belongs to the SCAB family. As to quaternary structure, dimer. Dimerization is required for actin-binding activity. As to expression, expressed in roots, stems, leaves, flowers, siliques and guard cells.

The protein localises to the cytoplasm. Its subcellular location is the cytoskeleton. Functionally, plant-specific actin binding protein that bundles and stabilizes microfilaments (MFs). Has no nucleation or capping activity. Regulates MF reorganization during stomatal closure. The binding to F-actin is insensitive to Ca(2+) and pH. Binds weakly to inositol phosphates. The polypeptide is Stomatal closure-related actin-binding protein 1 (Arabidopsis thaliana (Mouse-ear cress)).